The primary structure comprises 155 residues: 3-hydroxyacyl-[acyl-carrier-protein] dehydratase FabZ (155 aa).

Histidine 54 is an active-site residue.

The protein belongs to the thioester dehydratase family. FabZ subfamily.

It is found in the cytoplasm. The catalysed reaction is a (3R)-hydroxyacyl-[ACP] = a (2E)-enoyl-[ACP] + H2O. Involved in unsaturated fatty acids biosynthesis. Catalyzes the dehydration of short chain beta-hydroxyacyl-ACPs and long chain saturated and unsaturated beta-hydroxyacyl-ACPs. The polypeptide is 3-hydroxyacyl-[acyl-carrier-protein] dehydratase FabZ (Burkholderia lata (strain ATCC 17760 / DSM 23089 / LMG 22485 / NCIMB 9086 / R18194 / 383)).